The sequence spans 148 residues: Protein Smg homolog (148 aa).

It belongs to the Smg family.

The chain is Protein Smg homolog from Thiobacillus denitrificans (strain ATCC 25259 / T1).